We begin with the raw amino-acid sequence, 599 residues long: Elongation factor 4 (599 aa).

In terms of domain architecture, tr-type G spans 5-187; the sequence is SHIRNFSIIA…ELVRLVPPPT (183 aa). GTP contacts are provided by residues 17–22 and 134–137; these read DHGKST and NKMD.

It belongs to the TRAFAC class translation factor GTPase superfamily. Classic translation factor GTPase family. LepA subfamily.

It is found in the cell inner membrane. It carries out the reaction GTP + H2O = GDP + phosphate + H(+). Its function is as follows. Required for accurate and efficient protein synthesis under certain stress conditions. May act as a fidelity factor of the translation reaction, by catalyzing a one-codon backward translocation of tRNAs on improperly translocated ribosomes. Back-translocation proceeds from a post-translocation (POST) complex to a pre-translocation (PRE) complex, thus giving elongation factor G a second chance to translocate the tRNAs correctly. Binds to ribosomes in a GTP-dependent manner. The sequence is that of Elongation factor 4 from Cellvibrio japonicus (strain Ueda107) (Pseudomonas fluorescens subsp. cellulosa).